The sequence spans 454 residues: tRNA(Ile)-lysidine synthase (454 aa).

31-36 (SGGADS) is an ATP binding site.

Belongs to the tRNA(Ile)-lysidine synthase family.

Its subcellular location is the cytoplasm. It catalyses the reaction cytidine(34) in tRNA(Ile2) + L-lysine + ATP = lysidine(34) in tRNA(Ile2) + AMP + diphosphate + H(+). Ligates lysine onto the cytidine present at position 34 of the AUA codon-specific tRNA(Ile) that contains the anticodon CAU, in an ATP-dependent manner. Cytidine is converted to lysidine, thus changing the amino acid specificity of the tRNA from methionine to isoleucine. This chain is tRNA(Ile)-lysidine synthase, found in Porphyromonas gingivalis (strain ATCC 33277 / DSM 20709 / CIP 103683 / JCM 12257 / NCTC 11834 / 2561).